Reading from the N-terminus, the 444-residue chain is Divalent metal cation transporter MntH (444 aa).

11 consecutive transmembrane segments (helical) span residues 31-51, 68-88, 115-135, 146-166, 175-195, 212-232, 267-287, 303-323, 356-376, 381-401, and 413-433; these read GGHW…VSVG, FGYL…VLQG, LALW…EVIG, IPLT…LLLM, AFVM…IALA, VVTN…TVMP, VALM…AAVF, ALLA…VALL, LLTR…YGEA, LLVL…IPLV, and LVAP…IVGL.

It belongs to the NRAMP family.

The protein resides in the cell inner membrane. Functionally, h(+)-stimulated, divalent metal cation uptake system. The chain is Divalent metal cation transporter MntH from Xanthomonas campestris pv. campestris (strain ATCC 33913 / DSM 3586 / NCPPB 528 / LMG 568 / P 25).